The chain runs to 448 residues: Portal protein (448 aa).

A disordered region spans residues 1–25; the sequence is MAKRGRKPKELVPGPGSIDPSDVPK.

It belongs to the P23virus portal protein family. In terms of assembly, homododecamer. Interacts with the capsid protein. Interacts with the terminase large subunit; this interaction allows the packaging of viral DNA.

It localises to the virion. Functionally, forms the portal vertex of the capsid. This portal plays critical roles in head assembly, genome packaging, neck/tail attachment, and genome ejection. The portal protein multimerizes as a single ring-shaped homododecamer arranged around a central channel. Forms the portal vertex of the capsid. This portal plays critical roles in head assembly, genome packaging, neck/tail attachment, and genome ejection. The sequence is that of Portal protein from Thermus thermophilus (Thermus thermophilus phage G20c).